Reading from the N-terminus, the 127-residue chain is MAEGKKYEIAVKVHTTYLPEQSDEALDRYVFAYTIVLSNTGTVTAQLISRHWVIADGSGGVQEVRGLGVVGEQPLLKPGDTYEYTSGTAISTPVGSMKGSYQMVAEDGLRFDAPIPEFILSVPRILH.

The ApaG domain maps to 3-127 (EGKKYEIAVK…FILSVPRILH (125 aa)).

This Nitrosospira multiformis (strain ATCC 25196 / NCIMB 11849 / C 71) protein is Protein ApaG.